A 358-amino-acid chain; its full sequence is Dihydroorotate dehydrogenase (quinone) (358 aa).

Residues 61 to 65 (AGFDK) and glycine 85 each bind FMN. Position 65 (lysine 65) interacts with substrate. 110 to 114 (NRFGL) lines the substrate pocket. The FMN site is built by asparagine 139 and asparagine 170. Asparagine 170 contributes to the substrate binding site. Catalysis depends on serine 173, which acts as the Nucleophile. Residue asparagine 175 coordinates substrate. Lysine 211 and serine 239 together coordinate FMN. 240–241 (NT) lines the substrate pocket. FMN contacts are provided by residues glycine 263, glycine 292, and 313–314 (YS).

Belongs to the dihydroorotate dehydrogenase family. Type 2 subfamily. As to quaternary structure, monomer. FMN serves as cofactor.

The protein localises to the cell membrane. It carries out the reaction (S)-dihydroorotate + a quinone = orotate + a quinol. It participates in pyrimidine metabolism; UMP biosynthesis via de novo pathway; orotate from (S)-dihydroorotate (quinone route): step 1/1. Functionally, catalyzes the conversion of dihydroorotate to orotate with quinone as electron acceptor. This is Dihydroorotate dehydrogenase (quinone) from Methylorubrum extorquens (strain CM4 / NCIMB 13688) (Methylobacterium extorquens).